Consider the following 189-residue polypeptide: Interferon alpha-13 (189 aa).

A signal peptide spans methionine 1–glycine 23. 2 cysteine pairs are disulfide-bonded: cysteine 24–cysteine 122 and cysteine 52–cysteine 162. N-linked (GlcNAc...) asparagine glycosylation is found at asparagine 94 and asparagine 101.

This sequence belongs to the alpha/beta interferon family.

It is found in the secreted. In terms of biological role, exhibits antiviral activity against Theiler's virus, Mengo virus and vesicular stomatitis virus. Interferons alpha stimulate the production of two enzymes: a protein kinase and an oligoadenylate synthetase. This Mus musculus (Mouse) protein is Interferon alpha-13 (Ifna13).